Reading from the N-terminus, the 92-residue chain is Em-like protein GEA6 (92 aa).

Composition is skewed to basic and acidic residues over residues 1–18 (MASQ…KKGE) and 37–51 (AEGR…KEQL). The interval 1 to 92 (MASQQEKKQL…IDESKFRTKT (92 aa)) is disordered.

It belongs to the small hydrophilic plant seed protein family. In terms of tissue distribution, present only in nearly dry and dry seeds.

Functionally, it is thought to provide protection for the cytoplasm during the desiccation stage of embryo development. This chain is Em-like protein GEA6 (EM6), found in Arabidopsis thaliana (Mouse-ear cress).